A 126-amino-acid polypeptide reads, in one-letter code: C-type natriuretic peptide 2 (126 aa).

Positions methionine 1–threonine 22 are cleaved as a signal peptide. The propeptide occupies arginine 23–lysine 102. The segment at serine 44–glycine 80 is disordered. Cysteine 110 and cysteine 126 are joined by a disulfide.

This sequence belongs to the natriuretic peptide family. As to expression, brain and spinal cord.

It localises to the secreted. In terms of biological role, exhibits natriuretic and vasodepressant activity. Has cGMP-stimulating activity. May help to regulate body fluid homeostasis in a variety of aquatic environments. The sequence is that of C-type natriuretic peptide 2 from Oryzias latipes (Japanese rice fish).